The following is a 159-amino-acid chain: Acetolactate synthase small subunit (159 aa).

In terms of domain architecture, ACT spans 5-79 (ILSILLENES…DVLKVTEIED (75 aa)).

This sequence belongs to the acetolactate synthase small subunit family. As to quaternary structure, dimer of large and small chains.

It catalyses the reaction 2 pyruvate + H(+) = (2S)-2-acetolactate + CO2. It functions in the pathway amino-acid biosynthesis; L-isoleucine biosynthesis; L-isoleucine from 2-oxobutanoate: step 1/4. Its pathway is amino-acid biosynthesis; L-valine biosynthesis; L-valine from pyruvate: step 1/4. The chain is Acetolactate synthase small subunit (ilvH) from Buchnera aphidicola subsp. Baizongia pistaciae (strain Bp).